The following is a 415-amino-acid chain: MLSRLSQTALVALSLMTVLTEAVPSRMRIQTRDSVNYQSEIVRGVNLGGWLVLEPWITPSIFENGGGAAVDEWTLAEVLGKDKARAILSQHWSSFITQDDFNQIAQAGMNHVRIPVGYWAVSAPDEPYVDGQLEFLDNAISWARAAGLKVMIDLHGAPGSQNGFDNSGRKGPIAWQQGDTVARTVDAFKALAERYLPESDVVTAIEAVNEPNIPGGVNEGQLKEYYNQVLEVVHSINPDAGVFLSDGFLATASWNGYANGENVVMDTHHYHMFDNTLISLDINAHVRAACEFGNQIKGSDKPVVVGEWTGALTDCTKHLNGKDIPTRYEGQWANSPRYGDCGNKRQGSSSGLSEQERSDTRRFIEAQLDAYEGKNGWLFWTWKTEGAPGWDMQDLLANGLFPNPPTERQYGNQCA.

The first 22 residues, Met1–Ala22, serve as a signal peptide directing secretion. The active-site Proton donor is the Glu210. Disulfide bonds link Cys290–Cys414 and Cys315–Cys341. Glu307 functions as the Nucleophile in the catalytic mechanism. The disordered stretch occupies residues Ser335–Asp359.

Belongs to the glycosyl hydrolase 5 (cellulase A) family. In terms of assembly, monomer. It depends on Mn(2+) as a cofactor.

The protein resides in the secreted. The enzyme catalyses Successive hydrolysis of beta-D-glucose units from the non-reducing ends of (1-&gt;3)-beta-D-glucans, releasing alpha-glucose.. Beta-glucanases participate in the metabolism of beta-glucan, the main structural component of the cell wall. It could also function biosynthetically as a transglycosylase. In Aspergillus clavatus (strain ATCC 1007 / CBS 513.65 / DSM 816 / NCTC 3887 / NRRL 1 / QM 1276 / 107), this protein is Probable glucan 1,3-beta-glucosidase A (exgA).